The sequence spans 217 residues: Phosphatidylinositol phosphate synthase (217 aa).

A run of 2 helical transmembrane segments spans residues 28-49 (LTPD…LTLF) and 55-74 (FAGA…DGAM). 31 to 34 (DVVT) serves as a coordination point for a CDP-1,2-diacyl-sn-glycerol. Asp68 and Asp71 together coordinate Mg(2+). A CDP-1,2-diacyl-sn-glycerol contacts are provided by Gly72, Arg76, and Thr82. Positions 89 and 93 each coordinate Mg(2+). Asp93 serves as the catalytic Proton acceptor. 4 consecutive transmembrane segments (helical) span residues 95-112 (ISDG…AFHM), 118-136 (VIAT…YIKA), 156-173 (LIIV…FVPW), and 179-200 (VGMW…HTVW).

Belongs to the CDP-alcohol phosphatidyltransferase class-I family. As to quaternary structure, homodimer. It depends on Mg(2+) as a cofactor.

It localises to the cell membrane. It carries out the reaction a CDP-1,2-diacyl-sn-glycerol + 1D-myo-inositol 3-phosphate = a 1,2-diacyl-sn-glycero-3-phospho-(1D-myo-inositol-3-phosphate) + CMP + H(+). The enzyme catalyses 1,2-di-(9Z-octadecenoyl)-sn-glycero-3-cytidine-5'-diphosphate + 1D-myo-inositol 3-phosphate = 1,2-di-(9Z-octadecenoyl)-sn-glycero-3-phospho-(1D-myo-inositol-3-phosphate) + CMP + H(+). The protein operates within phospholipid metabolism; phosphatidylinositol phosphate biosynthesis. With respect to regulation, competitively inhibited by several inositol 1-phosphate analogs, including the phosphonate analog 1-deoxy-1-phosphonomethyl-myo-inositol (Ino-C-P). Its function is as follows. Catalyzes the conjugation of the 1'-hydroxyl group of D-myo-inositol-3-phosphate (also named L-myo-inositol-1-phosphate) with a lipid tail of cytidine diphosphate diacylglycerol (CDP-DAG), forming phosphatidylinositol phosphate (PIP) and CMP. PIP is a precursor of phosphatidylinositol (PI) which is an essential lipid for mycobacteria required for formation of their cell wall. This is Phosphatidylinositol phosphate synthase from Mycobacterium bovis (strain BCG / Pasteur 1173P2).